The primary structure comprises 310 residues: Protoheme IX farnesyltransferase 2 (310 aa).

The next 9 membrane-spanning stretches (helical) occupy residues 25-45 (PGIIFGNLISVAGGFLLAAKG), 49-69 (LVLMLASLVGLSLVVASGCAI), 98-118 (HVLLFGIALGVLGFGILALFT), 121-141 (LALLFAAIGYVVYVGIYSLYM), 145-165 (SVYGTLVGSFSGAVPPVVGYC), 176-196 (VILLLMFSLWQMPHSYAIAIF), 222-242 (IVLYIAVFALVSTMLPLAGYT), 245-265 (AFMAVTCATSLWWLTMALKGY), and 277-297 (QVFGFSIITITALSVTMALDF).

The protein belongs to the UbiA prenyltransferase family. Protoheme IX farnesyltransferase subfamily.

The protein localises to the cell inner membrane. It catalyses the reaction heme b + (2E,6E)-farnesyl diphosphate + H2O = Fe(II)-heme o + diphosphate. It participates in porphyrin-containing compound metabolism; heme O biosynthesis; heme O from protoheme: step 1/1. Converts heme B (protoheme IX) to heme O by substitution of the vinyl group on carbon 2 of heme B porphyrin ring with a hydroxyethyl farnesyl side group. The protein is Protoheme IX farnesyltransferase 2 of Shewanella sp. (strain ANA-3).